The primary structure comprises 402 residues: uncharacterized protein (402 aa).

This is an uncharacterized protein from Ostreid herpesvirus 1 (isolate France) (OsHV-1).